Reading from the N-terminus, the 409-residue chain is Peptidase T (409 aa).

His80 contributes to the Zn(2+) binding site. Residue Asp82 is part of the active site. Asp143 serves as a coordination point for Zn(2+). Glu177 acts as the Proton acceptor in catalysis. Residues Glu178, Asp200, and His382 each contribute to the Zn(2+) site.

It belongs to the peptidase M20B family. Zn(2+) is required as a cofactor.

It localises to the cytoplasm. The enzyme catalyses Release of the N-terminal residue from a tripeptide.. Functionally, cleaves the N-terminal amino acid of tripeptides. This Enterococcus faecalis (strain ATCC 700802 / V583) protein is Peptidase T.